The following is a 103-amino-acid chain: Small ribosomal subunit protein uS10 (103 aa).

The protein belongs to the universal ribosomal protein uS10 family. In terms of assembly, part of the 30S ribosomal subunit.

Its function is as follows. Involved in the binding of tRNA to the ribosomes. This Polynucleobacter necessarius subsp. necessarius (strain STIR1) protein is Small ribosomal subunit protein uS10.